The chain runs to 276 residues: Formamidopyrimidine-DNA glycosylase (276 aa).

The active-site Schiff-base intermediate with DNA is the Pro2. Glu3 functions as the Proton donor in the catalytic mechanism. Lys58 acts as the Proton donor; for beta-elimination activity in catalysis. Residues His92, Arg111, and Arg154 each coordinate DNA. Residues 239 to 273 (HAYQRTGDPCERCGTPIQRIVVGQRGTHFCPKCQV) form an FPG-type zinc finger. The active-site Proton donor; for delta-elimination activity is Arg263.

It belongs to the FPG family. As to quaternary structure, monomer. The cofactor is Zn(2+).

It catalyses the reaction Hydrolysis of DNA containing ring-opened 7-methylguanine residues, releasing 2,6-diamino-4-hydroxy-5-(N-methyl)formamidopyrimidine.. The enzyme catalyses 2'-deoxyribonucleotide-(2'-deoxyribose 5'-phosphate)-2'-deoxyribonucleotide-DNA = a 3'-end 2'-deoxyribonucleotide-(2,3-dehydro-2,3-deoxyribose 5'-phosphate)-DNA + a 5'-end 5'-phospho-2'-deoxyribonucleoside-DNA + H(+). Its function is as follows. Involved in base excision repair of DNA damaged by oxidation or by mutagenic agents. Acts as a DNA glycosylase that recognizes and removes damaged bases. Has a preference for oxidized purines, such as 7,8-dihydro-8-oxoguanine (8-oxoG). Has AP (apurinic/apyrimidinic) lyase activity and introduces nicks in the DNA strand. Cleaves the DNA backbone by beta-delta elimination to generate a single-strand break at the site of the removed base with both 3'- and 5'-phosphates. The protein is Formamidopyrimidine-DNA glycosylase of Ligilactobacillus salivarius (strain UCC118) (Lactobacillus salivarius).